A 345-amino-acid chain; its full sequence is Dihydroorotase (345 aa).

Zn(2+) is bound by residues His13 and His15. Substrate-binding positions include 15 to 17 and Asn41; that span reads HLR. 3 residues coordinate Zn(2+): Lys99, His136, and His174. N6-carboxylysine is present on Lys99. His136 serves as a coordination point for substrate. Residue Leu219 participates in substrate binding. Asp247 lines the Zn(2+) pocket. Asp247 is a catalytic residue. Substrate-binding residues include His251 and Ala263.

The protein belongs to the metallo-dependent hydrolases superfamily. DHOase family. Class II DHOase subfamily. Homodimer. Zn(2+) serves as cofactor.

It catalyses the reaction (S)-dihydroorotate + H2O = N-carbamoyl-L-aspartate + H(+). Its pathway is pyrimidine metabolism; UMP biosynthesis via de novo pathway; (S)-dihydroorotate from bicarbonate: step 3/3. Its function is as follows. Catalyzes the reversible cyclization of carbamoyl aspartate to dihydroorotate. The protein is Dihydroorotase of Acaryochloris marina (strain MBIC 11017).